Consider the following 445-residue polypeptide: Phosphoglucosamine mutase (445 aa).

Residue Ser102 is the Phosphoserine intermediate of the active site. Mg(2+)-binding residues include Ser102, Asp241, Asp243, and Asp245. Ser102 carries the post-translational modification Phosphoserine.

The protein belongs to the phosphohexose mutase family. Requires Mg(2+) as cofactor. In terms of processing, activated by phosphorylation.

The catalysed reaction is alpha-D-glucosamine 1-phosphate = D-glucosamine 6-phosphate. In terms of biological role, catalyzes the conversion of glucosamine-6-phosphate to glucosamine-1-phosphate. The protein is Phosphoglucosamine mutase of Shigella flexneri serotype 5b (strain 8401).